Reading from the N-terminus, the 180-residue chain is Inosine/xanthosine triphosphatase (180 aa).

A substrate-binding site is contributed by 8–13; that stretch reads TTNPAK. D38 is a Mg(2+) binding site.

It belongs to the YjjX NTPase family. In terms of assembly, homodimer. Mg(2+) is required as a cofactor. It depends on Mn(2+) as a cofactor.

It carries out the reaction XTP + H2O = XDP + phosphate + H(+). It catalyses the reaction ITP + H2O = IDP + phosphate + H(+). Its function is as follows. Phosphatase that hydrolyzes non-canonical purine nucleotides such as XTP and ITP to their respective diphosphate derivatives. Probably excludes non-canonical purines from DNA/RNA precursor pool, thus preventing their incorporation into DNA/RNA and avoiding chromosomal lesions. This Yersinia pseudotuberculosis serotype O:1b (strain IP 31758) protein is Inosine/xanthosine triphosphatase.